Here is a 176-residue protein sequence, read N- to C-terminus: Urease accessory protein UreE (176 aa).

The protein belongs to the UreE family.

Its subcellular location is the cytoplasm. Its function is as follows. Involved in urease metallocenter assembly. Binds nickel. Probably functions as a nickel donor during metallocenter assembly. This is Urease accessory protein UreE from Helicobacter bizzozeronii.